Reading from the N-terminus, the 255-residue chain is Probable ubiquitin carboxyl-terminal hydrolase (255 aa).

Residues 13-237 (NWIPLEANPE…IRFNLMGLVK (225 aa)) form the UCH catalytic domain. The interaction with ubiquitin stretch occupies residues 16 to 21 (PLEANP). Residue Cys103 is the Nucleophile of the active site. His177 acts as the Proton donor in catalysis. Residues 227 to 232 (EIRFNL) are interaction with ubiquitin. Residues 235 to 255 (LVKKPNEESEEEEEKEKEETK) form a disordered region. A compositionally biased stretch (acidic residues) spans 242 to 255 (ESEEEEEKEKEETK).

Belongs to the peptidase C12 family.

It is found in the cytoplasm. It catalyses the reaction Thiol-dependent hydrolysis of ester, thioester, amide, peptide and isopeptide bonds formed by the C-terminal Gly of ubiquitin (a 76-residue protein attached to proteins as an intracellular targeting signal).. Functionally, ubiquitin-protein hydrolase is involved both in the processing of ubiquitin precursors and of ubiquitinated proteins. This enzyme is a thiol protease that recognizes and hydrolyzes a peptide bond at the C-terminal glycine of either ubiquitin or nedd8. The chain is Probable ubiquitin carboxyl-terminal hydrolase (uch1) from Dictyostelium discoideum (Social amoeba).